The primary structure comprises 205 residues: Thymidine kinase (205 aa).

ATP-binding positions include 9–16 (SAMNAGKS) and 87–90 (DECQ). The active-site Proton acceptor is the Glu-88. Residues Cys-145, Cys-147, Cys-182, and His-185 each coordinate Zn(2+).

It belongs to the thymidine kinase family. In terms of assembly, homotetramer.

The protein localises to the cytoplasm. The enzyme catalyses thymidine + ATP = dTMP + ADP + H(+). Its activity is regulated as follows. Allosteric enzyme which is feedback inhibited by dTTP and activated by a number of dNDP and dNTP. Its function is as follows. Phosphorylates both thymidine and deoxyuridine. This is Thymidine kinase from Escherichia coli (strain K12).